A 91-amino-acid polypeptide reads, in one-letter code: Class I hydrophobin 3 (91 aa).

An N-terminal signal peptide occupies residues 1-17 (MLFRLFTIPSIALGVLG). Disulfide bonds link Cys31/Cys70, Cys35/Cys61, Cys36/Cys53, and Cys71/Cys87.

The protein belongs to the fungal hydrophobin family. In terms of assembly, self-assembles to form functional amyloid fibrils called rodlets. Self-assembly into fibrillar rodlets occurs spontaneously at hydrophobic:hydrophilic interfaces and the rodlets further associate laterally to form amphipathic monolayers. In terms of tissue distribution, expressed in conidia.

It localises to the secreted. The protein resides in the cell wall. Its function is as follows. Aerial growth, conidiation, and dispersal of filamentous fungi in the environment rely upon a capability of their secreting small amphipathic proteins called hydrophobins (HPBs) with low sequence identity. Class I can self-assemble into an outermost layer of rodlet bundles on aerial cell surfaces, conferring cellular hydrophobicity that supports fungal growth, development and dispersal; whereas Class II form highly ordered films at water-air interfaces through intermolecular interactions but contribute nothing to the rodlet structure. HYD3 is a class I hydrophobin located on the conidial surface that activates specifically the humoral and cellular immunity of Metarhizium acridum's own host insect, Locusta migratoria manilensis (Meyen) but not that of other non-host insects. Improves the resistance of locusts to both specialist and generalist fungal pathogens (wide host range) when topically applied to the cuticle, but has no effect on the fungal resistance of other insects, including Spodoptera frugiperda and Galleria mellonella. The polypeptide is Class I hydrophobin 3 (Metarhizium acridum (strain CQMa 102)).